Here is a 420-residue protein sequence, read N- to C-terminus: MTEFCAPKGVPDYVPPDSAQFVAVRDGLLTAARRAGYGHIELPIFEDTALFARGVGESTDVVSKEMYTFADRGDRSVTLRPEGTAGVVRAVIEHGLDRGALPVKLCYAGPFFRYERPQAGRYRQLQQVGVEAIGVDDPALDAEVIAIADAGFRSLGLDGFRLEVTSLGDETCRPQYRELLQEFLFGLDLDDDTRRRAALNPLRVLDDKRPEVRAMTAEAPVLLDHLSDVAKQHFDTVLAHLDALRVPYVINPRMVRGLDYYTKTTFEFVHDGLGAQSGIGGGGRYDGLMKQLGGQDLSGIGFGLGVDRTMLALRAEGKSVGESARCDVFGVPLSEQAKLTLAVLAGQLRASGVRVDLAYGDRGLKGAMRAADRSGARVALVAGDRDIEAGTVGVKDLGTGEQVSVSTDSVVDDVISKLGR.

It belongs to the class-II aminoacyl-tRNA synthetase family. In terms of assembly, homodimer.

The protein resides in the cytoplasm. It carries out the reaction tRNA(His) + L-histidine + ATP = L-histidyl-tRNA(His) + AMP + diphosphate + H(+). The protein is Histidine--tRNA ligase of Mycobacterium marinum (strain ATCC BAA-535 / M).